Here is a 413-residue protein sequence, read N- to C-terminus: Phosphoglycerate kinase (413 aa).

Residues aspartate 19–asparagine 21, arginine 34, histidine 57–lysine 60, arginine 114, and arginine 154 each bind substrate. Residues glutamate 332 and glycine 358–serine 361 contribute to the ATP site.

Belongs to the phosphoglycerate kinase family. As to quaternary structure, monomer.

It localises to the cytoplasm. The enzyme catalyses (2R)-3-phosphoglycerate + ATP = (2R)-3-phospho-glyceroyl phosphate + ADP. It participates in carbohydrate degradation; glycolysis; pyruvate from D-glyceraldehyde 3-phosphate: step 2/5. This chain is Phosphoglycerate kinase, found in Thermococcus sibiricus (strain DSM 12597 / MM 739).